Consider the following 201-residue polypeptide: Ras-related protein RabA (201 aa).

15–22 serves as a coordination point for GTP; that stretch reads GDSGVGKS. The Effector region signature appears at 37-45; that stretch reads YISTIGVDF. GTP contacts are provided by residues 63–67 and 121–124; these read DTAGQ and NKSD. Residue C198 is modified to Cysteine methyl ester. A lipid anchor (S-geranylgeranyl cysteine) is attached at C198. The propeptide at 199 to 201 is removed in mature form; the sequence is IIN.

This sequence belongs to the small GTPase superfamily. Rab family.

It is found in the cell membrane. The sequence is that of Ras-related protein RabA (rabA) from Dictyostelium discoideum (Social amoeba).